The sequence spans 264 residues: Indole-3-glycerol phosphate synthase (264 aa).

Belongs to the TrpC family.

The enzyme catalyses 1-(2-carboxyphenylamino)-1-deoxy-D-ribulose 5-phosphate + H(+) = (1S,2R)-1-C-(indol-3-yl)glycerol 3-phosphate + CO2 + H2O. It functions in the pathway amino-acid biosynthesis; L-tryptophan biosynthesis; L-tryptophan from chorismate: step 4/5. The polypeptide is Indole-3-glycerol phosphate synthase (Lactococcus lactis subsp. cremoris (strain MG1363)).